A 379-amino-acid polypeptide reads, in one-letter code: Chaperone protein DnaJ (379 aa).

The region spanning 7 to 72 is the J domain; that stretch reads CYYETLEVER…DKRAAYDRYG (66 aa). A CR-type zinc finger spans residues 135–213; that stretch reads GKTAQIEIPV…CTGSGRVTKE (79 aa). Residues C148, C151, C165, C168, C187, C190, C201, and C204 each contribute to the Zn(2+) site. CXXCXGXG motif repeat units lie at residues 148 to 155, 165 to 172, 187 to 194, and 201 to 208; these read CESCSGTG, CSTCGGAG, CPSCQGRG, and CPSCTGSG.

It belongs to the DnaJ family. As to quaternary structure, homodimer. Zn(2+) is required as a cofactor.

It is found in the cytoplasm. In terms of biological role, participates actively in the response to hyperosmotic and heat shock by preventing the aggregation of stress-denatured proteins and by disaggregating proteins, also in an autonomous, DnaK-independent fashion. Unfolded proteins bind initially to DnaJ; upon interaction with the DnaJ-bound protein, DnaK hydrolyzes its bound ATP, resulting in the formation of a stable complex. GrpE releases ADP from DnaK; ATP binding to DnaK triggers the release of the substrate protein, thus completing the reaction cycle. Several rounds of ATP-dependent interactions between DnaJ, DnaK and GrpE are required for fully efficient folding. Also involved, together with DnaK and GrpE, in the DNA replication of plasmids through activation of initiation proteins. This is Chaperone protein DnaJ from Rhodopseudomonas palustris (strain HaA2).